A 1385-amino-acid chain; its full sequence is PsbD mRNA maturation factor Nac2, chloroplastic (1385 aa).

A chloroplast-targeting transit peptide spans 1–45 (MGALPCPAHIEHHQGLSSFGTRRVLRQSVACGAHRSRRRSLWAGA). A compositionally biased stretch (low complexity) spans 132-152 (GPHGAASATGAGSHSSSAGAP). Disordered stretches follow at residues 132–157 (GPHG…PTPR), 263–282 (AVAA…RSSA), 304–360 (TSSR…AAGP), 387–502 (RQQP…GHGQ), 546–568 (NGAG…SGTS), 726–756 (HADS…VAAA), and 840–899 (ARRA…APSA). Basic and acidic residues predominate over residues 271-281 (QPHEHQQERSS). Low complexity predominate over residues 304–313 (TSSRRGGRSS). Positions 403–412 (NGSGKSGSGG) are enriched in gly residues. Low complexity-rich tracts occupy residues 448-464 (APAA…RPAA), 554-568 (ASAS…SGTS), 729-744 (SSSS…SSSG), and 854-893 (ASTT…AAAG). 9 TPR repeats span residues 851–884 (RRGA…DPAS), 951–984 (GAVM…CPAD), 985–1018 (VALY…DRTD), 1019–1052 (KQLF…HPLN), 1053–1086 (TKII…DPLS), 1091–1124 (VHNR…HPNS), 1125–1158 (AALL…AGAF), 1160–1193 (AAVM…KQLN), and 1205–1238 (AWRA…APAV). 2 disordered regions span residues 1237–1257 (AVRG…GRRP) and 1333–1385 (IQDP…ADDM). The span at 1356 to 1365 (QDADYYEEPE) shows a compositional bias: acidic residues. Over residues 1374–1385 (AVRRPMPDADDM) the composition is skewed to basic and acidic residues.

In terms of assembly, part of 2 complexes of about 600 and less than 2000 kDa, both of which also contain non-polysomal RNA.

The protein resides in the plastid. It localises to the chloroplast stroma. In terms of biological role, involved, directly or indirectly, in the processing of the chloroplast encoded psbD mRNA to its mature form, acting via the 5'-UTR of the psbD mRNA. The last 588 amino acids of the protein are sufficient to confer stability on the transcript in vivo. In Chlamydomonas reinhardtii (Chlamydomonas smithii), this protein is PsbD mRNA maturation factor Nac2, chloroplastic (NAC2).